The following is a 119-amino-acid chain: Ribosome-binding factor A (119 aa).

It belongs to the RbfA family. In terms of assembly, monomer. Binds 30S ribosomal subunits, but not 50S ribosomal subunits or 70S ribosomes.

The protein localises to the cytoplasm. Its function is as follows. One of several proteins that assist in the late maturation steps of the functional core of the 30S ribosomal subunit. Associates with free 30S ribosomal subunits (but not with 30S subunits that are part of 70S ribosomes or polysomes). Required for efficient processing of 16S rRNA. May interact with the 5'-terminal helix region of 16S rRNA. The chain is Ribosome-binding factor A from Buchnera aphidicola subsp. Baizongia pistaciae (strain Bp).